Consider the following 177-residue polypeptide: Outer membrane lipoprotein Blc (177 aa).

The signal sequence occupies residues 1 to 18; that stretch reads MRILPVVAAVTAAFLVVA. Cys19 carries N-palmitoyl cysteine lipidation. Cys19 carries the S-diacylglycerol cysteine lipid modification.

The protein belongs to the calycin superfamily. Lipocalin family. In terms of assembly, homodimer.

The protein resides in the cell outer membrane. In terms of biological role, involved in the storage or transport of lipids necessary for membrane maintenance under stressful conditions. Displays a binding preference for lysophospholipids. The chain is Outer membrane lipoprotein Blc from Citrobacter freundii.